The sequence spans 411 residues: uncharacterized protein (411 aa).

In the C-terminal section; belongs to the PAPS reductase family.

This is an uncharacterized protein from Methanocaldococcus jannaschii (strain ATCC 43067 / DSM 2661 / JAL-1 / JCM 10045 / NBRC 100440) (Methanococcus jannaschii).